A 296-amino-acid chain; its full sequence is uncharacterized protein (296 aa).

An N-terminal signal peptide occupies residues 1-20 (MRKFIFVLLTLLLVSPFSFA).

This is an uncharacterized protein from Escherichia coli (strain K12).